The primary structure comprises 134 residues: ATP synthase epsilon chain (134 aa).

It belongs to the ATPase epsilon chain family. In terms of assembly, F-type ATPases have 2 components, CF(1) - the catalytic core - and CF(0) - the membrane proton channel. CF(1) has five subunits: alpha(3), beta(3), gamma(1), delta(1), epsilon(1). CF(0) has three main subunits: a, b and c.

The protein localises to the cell membrane. Its function is as follows. Produces ATP from ADP in the presence of a proton gradient across the membrane. The protein is ATP synthase epsilon chain (atpC) of Priestia megaterium (strain ATCC 12872 / QMB1551) (Bacillus megaterium).